The chain runs to 611 residues: DNA mismatch repair protein MutL (611 aa).

The disordered stretch occupies residues Asn-353–Val-387. The segment covering Ala-363 to Ser-380 has biased composition (low complexity).

The protein belongs to the DNA mismatch repair MutL/HexB family.

Functionally, this protein is involved in the repair of mismatches in DNA. It is required for dam-dependent methyl-directed DNA mismatch repair. May act as a 'molecular matchmaker', a protein that promotes the formation of a stable complex between two or more DNA-binding proteins in an ATP-dependent manner without itself being part of a final effector complex. This Erwinia tasmaniensis (strain DSM 17950 / CFBP 7177 / CIP 109463 / NCPPB 4357 / Et1/99) protein is DNA mismatch repair protein MutL.